The primary structure comprises 179 residues: DELTA-miturgitoxin-Cp2a (179 aa).

The N-terminal stretch at 1 to 20 (MKFSLFFGVLFLAILHSCLS) is a signal peptide. The propeptide occupies 21-47 (ESEKDLTDEDHFRSSDSFLSEIQEESR). The short motif at 44–47 (EESR) is the Processing quadruplet motif element. 8 disulfides stabilise this stretch: Cys-51–Cys-66, Cys-58–Cys-75, Cys-65–Cys-88, Cys-77–Cys-86, Cys-115–Cys-130, Cys-122–Cys-139, Cys-129–Cys-158, and Cys-141–Cys-156. A Valine amide modification is found at Val-178.

This sequence belongs to the spider toxin CSTX family. Double-CSTX subfamily. Cleavage of the propeptide depends on the processing quadruplet motif (XXXR, with at least one of X being E). As to expression, expressed by the venom gland.

It localises to the secreted. In terms of biological role, spider venom toxin that exhibits cytolytic activity by forming an alpha-helix across the membrane. Lethal to insect larvae. This Cheiracanthium punctorium (Yellow sac spider) protein is DELTA-miturgitoxin-Cp2a.